A 333-amino-acid chain; its full sequence is uncharacterized protein (333 aa).

The N-terminal stretch at 1 to 16 (MRPFLMILSVTYIASA) is a signal peptide. N-linked (GlcNAc...) asparagine glycosylation is present at Asn204.

This is an uncharacterized protein from Encephalitozoon cuniculi (strain GB-M1) (Microsporidian parasite).